We begin with the raw amino-acid sequence, 360 residues long: Peptide chain release factor 1 (360 aa).

An N5-methylglutamine modification is found at Gln235. Positions 284–304 (KVDSERSADRKSQVGSGDRSE) are disordered.

The protein belongs to the prokaryotic/mitochondrial release factor family. Methylated by PrmC. Methylation increases the termination efficiency of RF1.

It is found in the cytoplasm. In terms of biological role, peptide chain release factor 1 directs the termination of translation in response to the peptide chain termination codons UAG and UAA. In Agrobacterium fabrum (strain C58 / ATCC 33970) (Agrobacterium tumefaciens (strain C58)), this protein is Peptide chain release factor 1.